The chain runs to 62 residues: Large ribosomal subunit protein bL28 (62 aa).

Belongs to the bacterial ribosomal protein bL28 family.

This is Large ribosomal subunit protein bL28 from Caldanaerobacter subterraneus subsp. tengcongensis (strain DSM 15242 / JCM 11007 / NBRC 100824 / MB4) (Thermoanaerobacter tengcongensis).